We begin with the raw amino-acid sequence, 529 residues long: GMP synthase [glutamine-hydrolyzing] (529 aa).

The region spanning P16–D205 is the Glutamine amidotransferase type-1 domain. The Nucleophile role is filled by C93. Residues H179 and E181 contribute to the active site. The region spanning W206–R403 is the GMPS ATP-PPase domain. ATP is bound at residue S233 to A239.

Homodimer.

It carries out the reaction XMP + L-glutamine + ATP + H2O = GMP + L-glutamate + AMP + diphosphate + 2 H(+). It participates in purine metabolism; GMP biosynthesis; GMP from XMP (L-Gln route): step 1/1. In terms of biological role, catalyzes the synthesis of GMP from XMP. In Mycobacterium leprae (strain Br4923), this protein is GMP synthase [glutamine-hydrolyzing].